A 213-amino-acid polypeptide reads, in one-letter code: Golgi SNAP receptor complex member 2 homolog memb-1 (213 aa).

Residues Met1–Asp189 lie on the Cytoplasmic side of the membrane. A helical; Anchor for type IV membrane protein transmembrane segment spans residues Trp190–Phe210. The Vesicular segment spans residues Trp211–Gly213.

It belongs to the GOSR2 family. Part of a unique SNARE complex.

It is found in the golgi apparatus. Its subcellular location is the cis-Golgi network membrane. It localises to the golgi apparatus membrane. The protein resides in the endoplasmic reticulum membrane. Its function is as follows. Involved in transport of proteins from the cis/medial-Golgi to the trans-Golgi network. The polypeptide is Golgi SNAP receptor complex member 2 homolog memb-1 (Caenorhabditis elegans).